The following is a 485-amino-acid chain: Pup--protein ligase (485 aa).

Residue Glu-33 participates in Mg(2+) binding. Position 76 (Arg-76) interacts with ATP. Tyr-78 provides a ligand contact to Mg(2+). Asp-80 acts as the Proton acceptor in catalysis. Glu-86 contributes to the Mg(2+) binding site. ATP-binding residues include Thr-89 and Trp-451.

It belongs to the Pup ligase/Pup deamidase family. Pup-conjugating enzyme subfamily.

It catalyses the reaction ATP + [prokaryotic ubiquitin-like protein]-L-glutamate + [protein]-L-lysine = ADP + phosphate + N(6)-([prokaryotic ubiquitin-like protein]-gamma-L-glutamyl)-[protein]-L-lysine.. The protein operates within protein degradation; proteasomal Pup-dependent pathway. Its pathway is protein modification; protein pupylation. Its function is as follows. Catalyzes the covalent attachment of the prokaryotic ubiquitin-like protein modifier Pup to the proteasomal substrate proteins, thereby targeting them for proteasomal degradation. This tagging system is termed pupylation. The ligation reaction involves the side-chain carboxylate of the C-terminal glutamate of Pup and the side-chain amino group of a substrate lysine. In Bifidobacterium longum subsp. infantis (strain ATCC 15697 / DSM 20088 / JCM 1222 / NCTC 11817 / S12), this protein is Pup--protein ligase.